The following is a 24-amino-acid chain: Waglerin-4 (24 aa).

A disulfide bridge connects residues Cys-11 and Cys-15.

The protein belongs to the waglerin family. Monomer. Expressed by the venom gland.

Its subcellular location is the secreted. Its function is as follows. Waglerin-2 selectively blocks the epsilon subunit of muscle nicotinic acetylcholine receptor (nAChR). Also has effects on rodent ionotropic GABA(A) receptors (GABR), since it potentiates I(GABA) in some neurons and depresses I(GABA) in others. In mice, it elicits tachypnea, ocular proptosis, rapid collapse and spasms, whereas no toxic effects on respiration and blood pressure are observed in rats. In terms of biological role, waglerin-4 selectively blocks the epsilon subunit of muscle nicotinic acetylcholine receptor. It elicits tachypnea, ocular proptosis, rapid collapse and spasms in mice. It causes death by respiratory failure. The polypeptide is Waglerin-4 (Tropidolaemus wagleri (Wagler's pit viper)).